The following is a 453-amino-acid chain: Bifunctional protein GlmU (453 aa).

The tract at residues 1 to 231 is pyrophosphorylase; the sequence is MERTCLAVIL…EIEMTGCNNR (231 aa). UDP-N-acetyl-alpha-D-glucosamine contacts are provided by residues 10-13, Lys-24, Gln-77, 82-83, 105-107, Gly-143, Glu-157, Asn-172, and Asn-229; these read LAAG, GT, and YGD. Asp-107 is a binding site for Mg(2+). Asn-229 lines the Mg(2+) pocket. A linker region spans residues 232–252; that stretch reads AELAVIERFWQERRRREMMLA. An N-acetyltransferase region spans residues 253–453; sequence GVTMIAPETV…AIKAAKRAKA (201 aa). The UDP-N-acetyl-alpha-D-glucosamine site is built by Arg-318 and Lys-336. His-348 serves as the catalytic Proton acceptor. UDP-N-acetyl-alpha-D-glucosamine contacts are provided by Tyr-351 and Asn-362. Residues Ala-365, 371-372, Ser-390, Ser-408, and Arg-425 each bind acetyl-CoA; that span reads NY.

This sequence in the N-terminal section; belongs to the N-acetylglucosamine-1-phosphate uridyltransferase family. In the C-terminal section; belongs to the transferase hexapeptide repeat family. In terms of assembly, homotrimer. Requires Mg(2+) as cofactor.

The protein resides in the cytoplasm. It catalyses the reaction alpha-D-glucosamine 1-phosphate + acetyl-CoA = N-acetyl-alpha-D-glucosamine 1-phosphate + CoA + H(+). The enzyme catalyses N-acetyl-alpha-D-glucosamine 1-phosphate + UTP + H(+) = UDP-N-acetyl-alpha-D-glucosamine + diphosphate. It participates in nucleotide-sugar biosynthesis; UDP-N-acetyl-alpha-D-glucosamine biosynthesis; N-acetyl-alpha-D-glucosamine 1-phosphate from alpha-D-glucosamine 6-phosphate (route II): step 2/2. Its pathway is nucleotide-sugar biosynthesis; UDP-N-acetyl-alpha-D-glucosamine biosynthesis; UDP-N-acetyl-alpha-D-glucosamine from N-acetyl-alpha-D-glucosamine 1-phosphate: step 1/1. It functions in the pathway bacterial outer membrane biogenesis; LPS lipid A biosynthesis. Its function is as follows. Catalyzes the last two sequential reactions in the de novo biosynthetic pathway for UDP-N-acetylglucosamine (UDP-GlcNAc). The C-terminal domain catalyzes the transfer of acetyl group from acetyl coenzyme A to glucosamine-1-phosphate (GlcN-1-P) to produce N-acetylglucosamine-1-phosphate (GlcNAc-1-P), which is converted into UDP-GlcNAc by the transfer of uridine 5-monophosphate (from uridine 5-triphosphate), a reaction catalyzed by the N-terminal domain. The polypeptide is Bifunctional protein GlmU (Rhizobium etli (strain CIAT 652)).